We begin with the raw amino-acid sequence, 210 residues long: Uracil phosphoribosyltransferase (210 aa).

5-phospho-alpha-D-ribose 1-diphosphate contacts are provided by residues Arg-78, Arg-103, and 130–138 (DPMLATGGT). Residues Ile-193 and 198–200 (GDA) contribute to the uracil site. Position 199 (Asp-199) interacts with 5-phospho-alpha-D-ribose 1-diphosphate.

It belongs to the UPRTase family. The cofactor is Mg(2+).

The enzyme catalyses UMP + diphosphate = 5-phospho-alpha-D-ribose 1-diphosphate + uracil. The protein operates within pyrimidine metabolism; UMP biosynthesis via salvage pathway; UMP from uracil: step 1/1. Allosterically activated by GTP. Functionally, catalyzes the conversion of uracil and 5-phospho-alpha-D-ribose 1-diphosphate (PRPP) to UMP and diphosphate. This is Uracil phosphoribosyltransferase from Xanthomonas campestris pv. campestris (strain 8004).